The primary structure comprises 793 residues: Phenylalanine--tRNA ligase beta subunit (793 aa).

One can recognise a tRNA-binding domain in the interval 39–154; the sequence is TCSFSSIITA…ENTPLGESAC (116 aa). One can recognise a B5 domain in the interval 403–481; it reads PQASTLSFRT…QPWKVENKKA (79 aa). Mg(2+)-binding residues include aspartate 457, aspartate 463, glutamate 466, and glutamate 467. The FDX-ACB domain occupies 697-793; sequence PIYPSSFRDI…QINDTKGTID (97 aa).

Belongs to the phenylalanyl-tRNA synthetase beta subunit family. Type 1 subfamily. In terms of assembly, tetramer of two alpha and two beta subunits. Requires Mg(2+) as cofactor.

It localises to the cytoplasm. It catalyses the reaction tRNA(Phe) + L-phenylalanine + ATP = L-phenylalanyl-tRNA(Phe) + AMP + diphosphate + H(+). The sequence is that of Phenylalanine--tRNA ligase beta subunit from Chlamydia caviae (strain ATCC VR-813 / DSM 19441 / 03DC25 / GPIC) (Chlamydophila caviae).